The primary structure comprises 64 residues: Large ribosomal subunit protein uL29 (64 aa).

This sequence belongs to the universal ribosomal protein uL29 family.

The chain is Large ribosomal subunit protein uL29 from Maridesulfovibrio salexigens (strain ATCC 14822 / DSM 2638 / NCIMB 8403 / VKM B-1763) (Desulfovibrio salexigens).